The chain runs to 223 residues: 7-cyano-7-deazaguanine synthase (223 aa).

12-22 (FSGGQDSTTCL) contributes to the ATP binding site. Zn(2+) is bound by residues C189, C198, C201, and C204.

This sequence belongs to the QueC family. Homodimer. Zn(2+) serves as cofactor.

The enzyme catalyses 7-carboxy-7-deazaguanine + NH4(+) + ATP = 7-cyano-7-deazaguanine + ADP + phosphate + H2O + H(+). It participates in purine metabolism; 7-cyano-7-deazaguanine biosynthesis. Functionally, catalyzes the ATP-dependent conversion of 7-carboxy-7-deazaguanine (CDG) to 7-cyano-7-deazaguanine (preQ(0)). The chain is 7-cyano-7-deazaguanine synthase from Halalkalibacterium halodurans (strain ATCC BAA-125 / DSM 18197 / FERM 7344 / JCM 9153 / C-125) (Bacillus halodurans).